Reading from the N-terminus, the 264-residue chain is Thymidylate synthase (264 aa).

DUMP is bound at residue Arg21. (6R)-5,10-methylene-5,6,7,8-tetrahydrofolate is bound at residue His51. 126–127 (RR) lines the dUMP pocket. The active-site Nucleophile is Cys146. Residues 166–169 (RSGD), Asn177, and 207–209 (HIY) contribute to the dUMP site. Residue Asp169 participates in (6R)-5,10-methylene-5,6,7,8-tetrahydrofolate binding. Ala263 provides a ligand contact to (6R)-5,10-methylene-5,6,7,8-tetrahydrofolate.

It belongs to the thymidylate synthase family. Bacterial-type ThyA subfamily. Homodimer.

The protein resides in the cytoplasm. The enzyme catalyses dUMP + (6R)-5,10-methylene-5,6,7,8-tetrahydrofolate = 7,8-dihydrofolate + dTMP. It functions in the pathway pyrimidine metabolism; dTTP biosynthesis. Its function is as follows. Catalyzes the reductive methylation of 2'-deoxyuridine-5'-monophosphate (dUMP) to 2'-deoxythymidine-5'-monophosphate (dTMP) while utilizing 5,10-methylenetetrahydrofolate (mTHF) as the methyl donor and reductant in the reaction, yielding dihydrofolate (DHF) as a by-product. This enzymatic reaction provides an intracellular de novo source of dTMP, an essential precursor for DNA biosynthesis. The protein is Thymidylate synthase of Sinorhizobium medicae (strain WSM419) (Ensifer medicae).